Here is a 271-residue protein sequence, read N- to C-terminus: Putative pyruvate, phosphate dikinase regulatory protein (271 aa).

G147–T154 provides a ligand contact to ADP.

It belongs to the pyruvate, phosphate/water dikinase regulatory protein family. PDRP subfamily.

The catalysed reaction is N(tele)-phospho-L-histidyl/L-threonyl-[pyruvate, phosphate dikinase] + ADP = N(tele)-phospho-L-histidyl/O-phospho-L-threonyl-[pyruvate, phosphate dikinase] + AMP + H(+). It catalyses the reaction N(tele)-phospho-L-histidyl/O-phospho-L-threonyl-[pyruvate, phosphate dikinase] + phosphate + H(+) = N(tele)-phospho-L-histidyl/L-threonyl-[pyruvate, phosphate dikinase] + diphosphate. Functionally, bifunctional serine/threonine kinase and phosphorylase involved in the regulation of the pyruvate, phosphate dikinase (PPDK) by catalyzing its phosphorylation/dephosphorylation. This Clostridium tetani (strain Massachusetts / E88) protein is Putative pyruvate, phosphate dikinase regulatory protein.